We begin with the raw amino-acid sequence, 317 residues long: uncharacterized protein (317 aa).

7 helical membrane passes run 18-38 (FWLI…LVII), 58-78 (IILS…GFIF), 92-112 (FLGS…WWSF), 130-150 (LFSA…AWAV), 159-179 (LFHI…KLLP), 202-222 (CSFL…LSTV), and 252-272 (NLLN…LLIA).

Belongs to the CbiQ family.

It localises to the cell membrane. This is an uncharacterized protein from Mycoplasma genitalium (strain ATCC 33530 / DSM 19775 / NCTC 10195 / G37) (Mycoplasmoides genitalium).